Here is a 173-residue protein sequence, read N- to C-terminus: NADH-ubiquinone oxidoreductase chain 6 (173 aa).

5 helical membrane-spanning segments follow: residues 1–21, 27–47, 48–68, 87–107, and 139–159; these read MTYF…AVAS, YGVV…LSLG, VSFV…VVFV, VVGY…VGGF, and CGVG…FVVL.

It belongs to the complex I subunit 6 family.

The protein resides in the mitochondrion membrane. The catalysed reaction is a ubiquinone + NADH + 5 H(+)(in) = a ubiquinol + NAD(+) + 4 H(+)(out). Its function is as follows. Core subunit of the mitochondrial membrane respiratory chain NADH dehydrogenase (Complex I) that is believed to belong to the minimal assembly required for catalysis. Complex I functions in the transfer of electrons from NADH to the respiratory chain. The immediate electron acceptor for the enzyme is believed to be ubiquinone. The chain is NADH-ubiquinone oxidoreductase chain 6 (MT-ND6) from Ptychoramphus aleuticus (Cassin's auklet).